The chain runs to 301 residues: NTE family protein RssA (301 aa).

The PNPLA domain occupies 8–168 (LALGSGAARG…VNPIPISLTR (161 aa)). Positions 39–43 (GCSIG) match the GXSXG motif. Serine 41 acts as the Nucleophile in catalysis. Aspartate 155 functions as the Proton acceptor in the catalytic mechanism. A DGA/G motif is present at residues 155 to 157 (DGA).

It belongs to the NTE family.

The protein is NTE family protein RssA (rssA) of Escherichia coli (strain K12).